A 120-amino-acid polypeptide reads, in one-letter code: Large ribosomal subunit protein bL19 (120 aa).

It belongs to the bacterial ribosomal protein bL19 family.

Its function is as follows. This protein is located at the 30S-50S ribosomal subunit interface and may play a role in the structure and function of the aminoacyl-tRNA binding site. In Nostoc sp. (strain PCC 7120 / SAG 25.82 / UTEX 2576), this protein is Large ribosomal subunit protein bL19 (rplS).